The following is a 390-amino-acid chain: Putative nickel insertion protein (390 aa).

This sequence belongs to the LarC family.

The chain is Putative nickel insertion protein from Geobacter metallireducens (strain ATCC 53774 / DSM 7210 / GS-15).